Reading from the N-terminus, the 130-residue chain is Histone H2A type 2-B (130 aa).

The tract at residues Met-1–Ala-22 is disordered. Ser-2 carries the N-acetylserine modification. Ser-2 bears the Phosphoserine; by RPS6KA5 mark. Citrulline; alternate is present on Arg-4. The residue at position 4 (Arg-4) is a Symmetric dimethylarginine; by PRMT5; alternate. An N6-(2-hydroxyisobutyryl)lysine modification is found at Lys-6. The segment covering Gln-7 to Ser-19 has biased composition (basic residues). The residue at position 10 (Lys-10) is an N6-(2-hydroxyisobutyryl)lysine; alternate. Residues Lys-10 and Lys-14 each carry the N6-(beta-hydroxybutyryl)lysine; alternate modification. Lys-10 is modified (N6-lactoyllysine; alternate). Position 10 is an N6-succinyllysine; alternate (Lys-10). Lys-14 participates in a covalent cross-link: Glycyl lysine isopeptide (Lys-Gly) (interchain with G-Cter in ubiquitin); alternate. Lys-16 is covalently cross-linked (Glycyl lysine isopeptide (Lys-Gly) (interchain with G-Cter in ubiquitin)). Lys-37 is modified (N6-(2-hydroxyisobutyryl)lysine; alternate). An N6-(beta-hydroxybutyryl)lysine; alternate modification is found at Lys-37. An N6-crotonyllysine; alternate modification is found at Lys-37. Residues Lys-75 and Lys-76 each carry the N6-(2-hydroxyisobutyryl)lysine modification. Lys-96 is subject to N6-(2-hydroxyisobutyryl)lysine; alternate. Lys-96 is modified (N6-(beta-hydroxybutyryl)lysine; alternate). Lys-96 is modified (N6-succinyllysine; alternate). Lys-96 is subject to N6-glutaryllysine; alternate. At Gln-105 the chain carries N5-methylglutamine. Lys-119 carries the post-translational modification N6-(2-hydroxyisobutyryl)lysine; alternate. The residue at position 119 (Lys-119) is an N6-(beta-hydroxybutyryl)lysine; alternate. N6-crotonyllysine; alternate is present on residues Lys-119 and Lys-120. An N6-glutaryllysine; alternate mark is found at Lys-119 and Lys-120. Residue Lys-120 forms a Glycyl lysine isopeptide (Lys-Gly) (interchain with G-Cter in ubiquitin); alternate linkage. Thr-121 is modified (phosphothreonine; by DCAF1).

This sequence belongs to the histone H2A family. As to quaternary structure, the nucleosome is a histone octamer containing two molecules each of H2A, H2B, H3 and H4 assembled in one H3-H4 heterotetramer and two H2A-H2B heterodimers. The octamer wraps approximately 147 bp of DNA. In terms of processing, deiminated on Arg-4 in granulocytes upon calcium entry. Monoubiquitination of Lys-120 (H2AK119Ub) by RING1, TRIM37 and RNF2/RING2 complex gives a specific tag for epigenetic transcriptional repression and participates in X chromosome inactivation of female mammals. It is involved in the initiation of both imprinted and random X inactivation. Ubiquitinated H2A is enriched in inactive X chromosome chromatin. Ubiquitination of H2A functions downstream of methylation of 'Lys-27' of histone H3 (H3K27me). H2AK119Ub by RNF2/RING2 can also be induced by ultraviolet and may be involved in DNA repair. Monoubiquitination of Lys-120 (H2AK119Ub) by TRIM37 may promote transformation of cells in a number of breast cancers. Following DNA double-strand breaks (DSBs), it is ubiquitinated through 'Lys-63' linkage of ubiquitin moieties by the E2 ligase UBE2N and the E3 ligases RNF8 and RNF168, leading to the recruitment of repair proteins to sites of DNA damage. Ubiquitination at Lys-14 and Lys-16 (H2AK13Ub and H2AK15Ub, respectively) in response to DNA damage is initiated by RNF168 that mediates monoubiquitination at these 2 sites, and 'Lys-63'-linked ubiquitin are then conjugated to monoubiquitin; RNF8 is able to extend 'Lys-63'-linked ubiquitin chains in vitro. Deubiquitinated by USP51 at Lys-14 and Lys-16 (H2AK13Ub and H2AK15Ub, respectively) after damaged DNA is repaired. H2AK119Ub and ionizing radiation-induced 'Lys-63'-linked ubiquitination (H2AK13Ub and H2AK15Ub) are distinct events. Post-translationally, phosphorylation on Ser-2 (H2AS1ph) is enhanced during mitosis. Phosphorylation on Ser-2 by RPS6KA5/MSK1 directly represses transcription. Acetylation of H3 inhibits Ser-2 phosphorylation by RPS6KA5/MSK1. Phosphorylation at Thr-121 (H2AT120ph) by DCAF1 is present in the regulatory region of many tumor suppresor genes and down-regulates their transcription. In terms of processing, symmetric dimethylation on Arg-4 by the PRDM1/PRMT5 complex may play a crucial role in the germ-cell lineage. Glutamine methylation at Gln-105 (H2AQ104me) by FBL is specifically dedicated to polymerase I. It is present at 35S ribosomal DNA locus and impairs binding of the FACT complex. Post-translationally, crotonylation (Kcr) is specifically present in male germ cells and marks testis-specific genes in post-meiotic cells, including X-linked genes that escape sex chromosome inactivation in haploid cells. Crotonylation marks active promoters and enhancers and confers resistance to transcriptional repressors. It is also associated with post-meiotically activated genes on autosomes. In terms of processing, lactylated in macrophages by EP300/P300 by using lactoyl-CoA directly derived from endogenous or exogenous lactate, leading to stimulates gene transcription.

Its subcellular location is the nucleus. The protein resides in the chromosome. In terms of biological role, core component of nucleosome. Nucleosomes wrap and compact DNA into chromatin, limiting DNA accessibility to the cellular machineries which require DNA as a template. Histones thereby play a central role in transcription regulation, DNA repair, DNA replication and chromosomal stability. DNA accessibility is regulated via a complex set of post-translational modifications of histones, also called histone code, and nucleosome remodeling. This Homo sapiens (Human) protein is Histone H2A type 2-B.